Consider the following 256-residue polypeptide: Imidazole glycerol phosphate synthase subunit HisF (256 aa).

Residues Asp11 and Asp130 contribute to the active site.

The protein belongs to the HisA/HisF family. As to quaternary structure, heterodimer of HisH and HisF.

It localises to the cytoplasm. The enzyme catalyses 5-[(5-phospho-1-deoxy-D-ribulos-1-ylimino)methylamino]-1-(5-phospho-beta-D-ribosyl)imidazole-4-carboxamide + L-glutamine = D-erythro-1-(imidazol-4-yl)glycerol 3-phosphate + 5-amino-1-(5-phospho-beta-D-ribosyl)imidazole-4-carboxamide + L-glutamate + H(+). It participates in amino-acid biosynthesis; L-histidine biosynthesis; L-histidine from 5-phospho-alpha-D-ribose 1-diphosphate: step 5/9. Its function is as follows. IGPS catalyzes the conversion of PRFAR and glutamine to IGP, AICAR and glutamate. The HisF subunit catalyzes the cyclization activity that produces IGP and AICAR from PRFAR using the ammonia provided by the HisH subunit. The chain is Imidazole glycerol phosphate synthase subunit HisF from Synechococcus sp. (strain CC9605).